A 422-amino-acid polypeptide reads, in one-letter code: L-threonine dehydratase biosynthetic IlvA (422 aa).

K60 bears the N6-(pyridoxal phosphate)lysine mark. Pyridoxal 5'-phosphate is bound by residues N87, 190–194 (GGGGL), and S315. In terms of domain architecture, ACT-like spans 339 to 413 (HYFIVNFPQR…KPFHYVEVNK (75 aa)).

The protein belongs to the serine/threonine dehydratase family. As to quaternary structure, homotetramer. The cofactor is pyridoxal 5'-phosphate.

It carries out the reaction L-threonine = 2-oxobutanoate + NH4(+). It functions in the pathway amino-acid biosynthesis; L-isoleucine biosynthesis; 2-oxobutanoate from L-threonine: step 1/1. Its function is as follows. Catalyzes the anaerobic formation of alpha-ketobutyrate and ammonia from threonine in a two-step reaction. The first step involved a dehydration of threonine and a production of enamine intermediates (aminocrotonate), which tautomerizes to its imine form (iminobutyrate). Both intermediates are unstable and short-lived. The second step is the nonenzymatic hydrolysis of the enamine/imine intermediates to form 2-ketobutyrate and free ammonia. In the low water environment of the cell, the second step is accelerated by RidA. The protein is L-threonine dehydratase biosynthetic IlvA (ilvA) of Bacillus subtilis (strain 168).